Consider the following 790-residue polypeptide: Ribosome biogenesis protein ERB1 (790 aa).

The interval 1 to 93 is disordered; sequence MAKKNTVTGS…SDELQDDSNS (93 aa). Positions 20–89 are enriched in acidic residues; it reads SPEVSESEEI…SEDFSDELQD (70 aa). The required for interaction with NOP7 stretch occupies residues 255–371; it reads RFVPSKHEAK…LRKVPAYQEN (117 aa). Positions 371-407 are required for interaction with YTM1; that stretch reads NLRERFERSLDLYLAPRVRHNKLNIDPDSLIPDLPSP. 7 WD repeats span residues 423–462, 470–510, 574–616, 619–657, 660–699, 703–743, and 759–790; these read GHIGRVRTLSIDPSGLWLATGGDDGTVRVWEILTGRQVYH, KDDD…YEIE, QCRK…SQSP, KSKGIIVDAKFHPFKPQLFVASQRSIKIYDLSQQVLTKK, PGARYLSGIDIHPRGDHLLASSYDKRVLWHDLDLSNTPYK, YHEK…DLMT, and VHSLGVLDLVWHPKEAWLFTAGADGTARLWTT.

This sequence belongs to the WD repeat BOP1/ERB1 family. Component of the NOP7 complex, composed of ERB1, NOP7 and YTM1. The complex is held together by ERB1, which interacts with NOP7 via its N-terminal domain and with YTM1 via a high-affinity interaction between the seven-bladed beta-propeller domains of the 2 proteins. The NOP7 complex associates with the 66S pre-ribosome.

It is found in the nucleus. It localises to the nucleolus. The protein resides in the nucleoplasm. Functionally, component of the NOP7 complex, which is required for maturation of the 25S and 5.8S ribosomal RNAs and formation of the 60S ribosome. This chain is Ribosome biogenesis protein ERB1, found in Meyerozyma guilliermondii (strain ATCC 6260 / CBS 566 / DSM 6381 / JCM 1539 / NBRC 10279 / NRRL Y-324) (Yeast).